The following is a 398-amino-acid chain: Bifunctional enzyme IspD/IspF (398 aa).

The 2-C-methyl-D-erythritol 4-phosphate cytidylyltransferase stretch occupies residues 1 to 234 (MPNPPRTAAI…SRLTALLGDI (234 aa)). Positions 235 to 398 (RTGTGYDVHA…LPWGAEGLAG (164 aa)) are 2-C-methyl-D-erythritol 2,4-cyclodiphosphate synthase. 2 residues coordinate a divalent metal cation: D241 and H243. 4-CDP-2-C-methyl-D-erythritol 2-phosphate is bound by residues 241-243 (DVH) and 267-268 (HS). H275 contacts a divalent metal cation. 4-CDP-2-C-methyl-D-erythritol 2-phosphate is bound by residues 289–291 (DIG), 365–368 (TTSE), F372, and R375.

The protein in the N-terminal section; belongs to the IspD/TarI cytidylyltransferase family. IspD subfamily. It in the C-terminal section; belongs to the IspF family. A divalent metal cation is required as a cofactor.

The enzyme catalyses 2-C-methyl-D-erythritol 4-phosphate + CTP + H(+) = 4-CDP-2-C-methyl-D-erythritol + diphosphate. The catalysed reaction is 4-CDP-2-C-methyl-D-erythritol 2-phosphate = 2-C-methyl-D-erythritol 2,4-cyclic diphosphate + CMP. It functions in the pathway isoprenoid biosynthesis; isopentenyl diphosphate biosynthesis via DXP pathway; isopentenyl diphosphate from 1-deoxy-D-xylulose 5-phosphate: step 2/6. Its pathway is isoprenoid biosynthesis; isopentenyl diphosphate biosynthesis via DXP pathway; isopentenyl diphosphate from 1-deoxy-D-xylulose 5-phosphate: step 4/6. Functionally, bifunctional enzyme that catalyzes the formation of 4-diphosphocytidyl-2-C-methyl-D-erythritol from CTP and 2-C-methyl-D-erythritol 4-phosphate (MEP) (IspD), and catalyzes the conversion of 4-diphosphocytidyl-2-C-methyl-D-erythritol 2-phosphate (CDP-ME2P) to 2-C-methyl-D-erythritol 2,4-cyclodiphosphate (ME-CPP) with a corresponding release of cytidine 5-monophosphate (CMP) (IspF). The chain is Bifunctional enzyme IspD/IspF from Rhodopseudomonas palustris (strain BisB5).